The primary structure comprises 336 residues: Phospho-N-acetylmuramoyl-pentapeptide-transferase (336 aa).

10 helical membrane-spanning segments follow: residues 3–23, 53–73, 78–98, 118–138, 143–163, 174–194, 200–220, 226–246, 251–271, and 316–336; these read LTLIAAIISFMVSAFTMPYFI, GGTVFLLVATAVSLLVSLFSI, SLALISGILSIVVIYGIIGFL, LALQLAGGLMFYFLHVSPSGI, VFGYQLSLGIFYLFFVLFWVV, GIDGLASISVVISLVTYGVIA, FDVLLLIGTMIGALLGFFLFN, VFMGDVGSLALGAMLAAISIA, WTLLIIGIVYVLETSSVMLQV, and AFLWGVGSLASLLVLAILYVF.

The protein belongs to the glycosyltransferase 4 family. MraY subfamily. The cofactor is Mg(2+).

The protein resides in the cell membrane. It catalyses the reaction UDP-N-acetyl-alpha-D-muramoyl-L-alanyl-gamma-D-glutamyl-L-lysyl-D-alanyl-D-alanine + di-trans,octa-cis-undecaprenyl phosphate = Mur2Ac(oyl-L-Ala-gamma-D-Glu-L-Lys-D-Ala-D-Ala)-di-trans,octa-cis-undecaprenyl diphosphate + UMP. It functions in the pathway cell wall biogenesis; peptidoglycan biosynthesis. Its function is as follows. Catalyzes the initial step of the lipid cycle reactions in the biosynthesis of the cell wall peptidoglycan: transfers peptidoglycan precursor phospho-MurNAc-pentapeptide from UDP-MurNAc-pentapeptide onto the lipid carrier undecaprenyl phosphate, yielding undecaprenyl-pyrophosphoryl-MurNAc-pentapeptide, known as lipid I. The polypeptide is Phospho-N-acetylmuramoyl-pentapeptide-transferase (Streptococcus pyogenes serotype M6 (strain ATCC BAA-946 / MGAS10394)).